A 123-amino-acid chain; its full sequence is Venom peptide MmKTx1 (123 aa).

A signal peptide spans 1–21 (MSIKISAIALFMLSFTVFVNG).

The protein belongs to the scorpion La1-like peptide family. Post-translationally, contains 4 disulfide bonds. In terms of tissue distribution, expressed by the venom gland.

It localises to the secreted. The protein is Venom peptide MmKTx1 of Olivierus martensii (Manchurian scorpion).